The following is an 883-amino-acid chain: Glutamate receptor 2 (883 aa).

Positions Met-1–Ser-24 are cleaved as a signal peptide. Residues Asn-25–Ala-543 are Extracellular-facing. A disulfide bond links Cys-78 and Cys-330. N-linked (GlcNAc...) asparagine glycosylation is found at Asn-256, Asn-370, Asn-406, and Asn-413. Pro-499, Thr-501, and Arg-506 together coordinate L-glutamate. The chain crosses the membrane as a helical span at residues Tyr-544–Val-564. Over Ser-565–Glu-591 the chain is Cytoplasmic. Positions Phe-592–Arg-607 form an intramembrane region, helical; Pore-forming. The stretch at Gln-608–Cys-610 is an intramembrane region. Cys-610 carries S-palmitoyl cysteine lipidation. The Cytoplasmic portion of the chain corresponds to Asp-611 to Ser-616. A helical membrane pass occupies residues Leu-617–Tyr-637. Residues Thr-638–Asn-812 lie on the Extracellular side of the membrane. L-glutamate is bound by residues Ser-675 and Thr-676. Ser-683 is modified (phosphoserine; by PKC). Residue Ser-717 is modified to Phosphoserine; by PKG. Glu-726 serves as a coordination point for L-glutamate. A disulfide bridge connects residues Cys-739 and Cys-794. The chain crosses the membrane as a helical span at residues Val-813–Ile-833. Topologically, residues Glu-834–Ile-883 are cytoplasmic. A lipid anchor (S-palmitoyl cysteine) is attached at Cys-836. Phosphoserine is present on residues Ser-860 and Ser-863. The segment at Ala-867 to Gly-877 is required for interaction with IQSEC1. Residue Tyr-876 is modified to Phosphotyrosine. Ser-880 carries the post-translational modification Phosphoserine.

It belongs to the glutamate-gated ion channel (TC 1.A.10.1) family. GRIA2 subfamily. In terms of assembly, homotetramer or heterotetramer of pore-forming glutamate receptor subunits. Tetramers may be formed by the dimerization of dimers. May interact with MPP4. Forms a ternary complex with GRIP1 and CSPG4. Interacts with ATAD1 in an ATP-dependent manner. ATAD1-catalyzed ATP hydrolysis disrupts binding to ATAD1 and to GRIP1 and leads to AMPAR complex disassembly. Interacts with GRIP1 and GRIP2. Interacts with NSF via its C-terminus. Isoform 1, but not isoform 3, interacts with PICK1. Interacts with CACNG2. Interacts with GRIA1 and SYNDIG1. Part of a complex containing GRIA2, NSF and NAPA and/or NAPB. Interacts with SNX27 (via PDZ domain); the interaction is required for recycling to the plasma membrane when endocytosed and prevent degradation in lysosomes. Interacts with LRFN1. Found in a complex with GRIA1, GRIA3, GRIA4, CNIH2, CNIH3, CACNG2, CACNG3, CACNG4, CACNG5, CACNG7 and CACNG8. Interacts with CACNG5. Interacts with OLFM2. Interacts with AP4B1, AP4E1 and AP4M1; probably indirect it mediates the somatodendritic localization of GRIA2 in neurons. Forms a complex with GRIP1, NSG1 and STX12; controls the intracellular fate of AMPAR and the endosomal sorting of the GRIA2 subunit toward recycling and membrane targeting. Interacts with IQSEC1; the interaction is required for ARF6 activation. Interacts (heterotetramer form) with CNIH2 and CNIH3; this interaction promotes expression at the plasma membrane and extensively modulates their gating properties by slowing deactivation and desensitization kinetics. Post-translationally, phosphorylation at Tyr-876 is required for interaction with IQSEC1 and ARF6 activation, which in turn triggers AMPAR internalization for persistent synaptic depression. In terms of processing, palmitoylated. Depalmitoylated upon L-glutamate stimulation. ZDHHC3/GODZ specifically palmitoylates Cys-610, which leads to Golgi retention and decreased cell surface expression. In contrast, Cys-836 palmitoylation does not affect cell surface expression but regulates stimulation-dependent endocytosis. N-glycosylated. Post-translationally, ubiquitinated by RNF167, leading to its degradation.

It is found in the cell membrane. Its subcellular location is the postsynaptic cell membrane. It localises to the postsynaptic density membrane. The enzyme catalyses Ca(2+)(in) = Ca(2+)(out). It carries out the reaction Na(+)(in) = Na(+)(out). Its function is as follows. Ionotropic glutamate receptor that functions as a ligand-gated cation channel, gated by L-glutamate and glutamatergic agonists such as alpha-amino-3-hydroxy-5-methyl-4-isoxazolepropionic acid (AMPA), quisqualic acid, and kainic acid. L-glutamate acts as an excitatory neurotransmitter at many synapses in the central nervous system and plays an important role in fast excitatory synaptic transmission. Binding of the excitatory neurotransmitter L-glutamate induces a conformation change, leading to the opening of the cation channel, and thereby converts the chemical signal to an electrical impulse upon entry of monovalent and divalent cations such as sodium and calcium. The receptor then desensitizes rapidly and enters in a transient inactive state, characterized by the presence of bound agonist. In the presence of CACNG4 or CACNG7 or CACNG8, shows resensitization which is characterized by a delayed accumulation of current flux upon continued application of L-glutamate. Through complex formation with NSG1, GRIP1 and STX12 controls the intracellular fate of AMPAR and the endosomal sorting of the GRIA2 subunit toward recycling and membrane targeting. This is Glutamate receptor 2 from Macaca fascicularis (Crab-eating macaque).